Here is a 393-residue protein sequence, read N- to C-terminus: Tryptophan 2,3-dioxygenase (393 aa).

Substrate-binding positions include Phe-56 to His-60 and Arg-127. His-312 provides a ligand contact to heme. Residue Thr-327 participates in substrate binding.

Belongs to the tryptophan 2,3-dioxygenase family. Homotetramer. Dimer of dimers. The cofactor is heme.

It carries out the reaction L-tryptophan + O2 = N-formyl-L-kynurenine. It functions in the pathway amino-acid degradation; L-tryptophan degradation via kynurenine pathway; L-kynurenine from L-tryptophan: step 1/2. It participates in pigment biosynthesis; ommochrome biosynthesis. With respect to regulation, stimulated by low concentrations of hydrogen peroxide (5 uM), ascorbate (0.1-0.3 mM), and sodium hydrosulfite (0.1 mM). Inhibited by high concentrations of hydrogen peroxide (0.1 mM), ascorbate (10 mM), and sodium hydrosulfite (1 mM). Its function is as follows. Heme-dependent dioxygenase that catalyzes the oxidative cleavage of the L-tryptophan (L-Trp) pyrrole ring and converts L-tryptophan to N-formyl-L-kynurenine. Catalyzes the oxidative cleavage of the indole moiety. This Aedes aegypti (Yellowfever mosquito) protein is Tryptophan 2,3-dioxygenase.